The sequence spans 1032 residues: Kinesin heavy chain isoform 5A (1032 aa).

N-acetylalanine is present on alanine 2. Residues 9–327 (SIKVLCRFRP…LMFGQRAKTI (319 aa)) enclose the Kinesin motor domain. 86–93 (GQTSSGKT) serves as a coordination point for ATP. A microtubule-binding region spans residues 174-315 (VSSPEEILDV…PSSYNDAETK (142 aa)). Residues 271–361 (EGTKSYVPYR…KTKAQKETIA (91 aa)) form a necessary for interaction with ZFYVE27 region. Residues 331 to 906 (ASVNLELTAE…VDRIKEAVRY (576 aa)) adopt a coiled-coil conformation. An interaction with BICD2 region spans residues 353 to 1032 (TKAQKETIAK…FPLHQETAAS (680 aa)). Threonine 397 is subject to Phosphothreonine. Disordered regions lie at residues 906-939 (YKSS…YGTR) and 978-1010 (SGAT…RSDL). Residues 907–1032 (KSSGKRGHSA…FPLHQETAAS (126 aa)) form a globular region. Low complexity predominate over residues 978–989 (SGATSSGGPLAS). Residues 991-1003 (QKANMDNGNATDI) are compositionally biased toward polar residues.

This sequence belongs to the TRAFAC class myosin-kinesin ATPase superfamily. Kinesin family. Kinesin subfamily. In terms of assembly, oligomer composed of two heavy chains and two light chains. Interacts with GRIP1. Interacts with FMR1 (via C-terminus); this interaction is increased in a mGluR-dependent manner. Interacts with ZFYVE27. Interacts with VAPA, VAPB, SURF4, RAB11A (GDP-bound form), RAB11B (GDP-bound form) and RTN3 in a ZFYVE27-dependent manner. Interacts with BORCS5. Interacts with BICD2. Interacts with DTNB. As to expression, distributed throughout the CNS but is highly enriched in subsets of neurons.

Its subcellular location is the cytoplasm. The protein localises to the perinuclear region. It is found in the cytoskeleton. The protein resides in the perikaryon. The catalysed reaction is ATP + H2O + a kinesin associated with a microtubule at position (n) = ADP + phosphate a kinesin associated with a microtubule at position (n+1, toward the plus end).. Its function is as follows. Microtubule-dependent motor required for slow axonal transport of neurofilament proteins (NFH, NFM and NFL). Can induce formation of neurite-like membrane protrusions in non-neuronal cells in a ZFYVE27-dependent manner. The ZFYVE27-KIF5A complex contributes to the vesicular transport of VAPA, VAPB, SURF4, RAB11A, RAB11B and RTN3 proteins in neurons. Required for anterograde axonal transportation of MAPK8IP3/JIP3 which is essential for MAPK8IP3/JIP3 function in axon elongation. The chain is Kinesin heavy chain isoform 5A from Homo sapiens (Human).